The primary structure comprises 218 residues: Glutathione S-transferase Mu 3 (218 aa).

The 87-residue stretch at 2-88 folds into the GST N-terminal domain; sequence PMTLGYWNTR…YLGRKHNLCG (87 aa). Residues 7–8, 46–50, and 59–60 contribute to the glutathione site; these read YW, WLSEK, and NL. Residue Lys-50 forms a Glycyl lysine isopeptide (Lys-Gly) (interchain with G-Cter in SUMO2) linkage. Residue Lys-69 forms a Glycyl lysine isopeptide (Lys-Gly) (interchain with G-Cter in SUMO2) linkage. Residue 72–73 coordinates glutathione; sequence QS. A GST C-terminal domain is found at 90 to 208; that stretch reads TEEERIRVDT…KSSRFLPRPV (119 aa).

This sequence belongs to the GST superfamily. Mu family. In terms of assembly, homodimer.

It is found in the cytoplasm. The catalysed reaction is RX + glutathione = an S-substituted glutathione + a halide anion + H(+). In terms of biological role, conjugation of reduced glutathione to a wide number of exogenous and endogenous hydrophobic electrophiles. This Mus musculus (Mouse) protein is Glutathione S-transferase Mu 3 (Gstm3).